The primary structure comprises 2551 residues: MENFKYRNNENDVAIIGIGFRLPGCKNFTPNELWNNLKNGFNGVVELSNRWSDNFYTMGKVSSAYAGLLPFDELKSFDPLFFGINPTEVPTIDPQQRILLKCTWEAFEDAGIDPIKIRGSNTSVFIGTSTNDYQRIIREKDQTITNAFGTSLHATSNRISYCFDFRGPSMTLDTACSSSLNCVKLGYQSIRDGTSNLSIAGGVNLIIDPYFTASISDLNILSKTGSCKTFDASADGFARAEGSGIIVMKNLKQAMIDGDKIYCVIKGASSNVDGGGLQDKSNFYAPSSLSQCNNIKMALKSTNGTVEPKDISYFECHGTGTPTGDPIETRGISMVFNDESRSKENPLLIGSIKSNIGHLEAGSGIASLIKCCLMFKNKCFAPNINFKVPNPKIKFEEWNLKVVTEPIQFTKSNTCIGLSNFGVTGSNCCLILSQFNNNNNDNQIVGNNNNIKSNKEYLIPFSSNSVKSLENYQQLLIKNGENEFKFLEFIKHQIFTKPTSLYQRSVVIASSWDQFNNAKIMKTSNSKSSNISIERNNPITVFVFCGQGSQYDRMGLELYNNDFIFKESMDLLDNKLSKYYGYSVLEKLRNCDSKSIQHPMIAQPVMCMFNISLFELYKHWGIEVSFIIGHSLGEIPAAYCSGMINIDTLCYLIYHRSIAQTKTHTNGRMLSINISADEYFSQYSKQYPDIEIACFNSPTSIVIAGNEQKLNEISEILKEKGIFSAMLASLSSFHTSSQNKVKEDIVNKQFDSKQSEIPIFSTVTTNLFDSVTSPFNSSYVFNNIVSPVKFSQTISNLYKHIESNQLGNDIVFIELAPHPTLQFYLKQMIPKPTNDDNSIEFKVSVYSALNKKNNDIEEIQRTISQLYCDNGYNVNFKCQFQHDDTHGSINSNINQLSNISLPHYQWDDEKYWKEDPSISKLIVNGPQTDNLGYLNENSPNSKSYETFIDIKRPPFQYLKGHMVKGKYYFPGCGYIDNLLKIYKSQDLTINQMGFKSPLIFIEGVNQALQTNIFKKSTSNTTTNNNDEFRVEYHFNDQKTNRWILSSFGDFQLSNHSSNSDNLEKINIKQLIQNQCNLTKLSRDELYSHIKSKTGLTYNGVFQGVNKCYLGENCSLSEVSLELKREPSSFFNTAVLDTCLHGMLCLLEEQSQLVFDRIEGFKYHSSNVPTSEEEMKIHSNIYVYSTINPSRIGDSYSASIVIMMEDGTVLIEIENAVCTSLTPIKESISVKYPTNQLFSMYLQSKDSPIPSPLNFKSLYNQNQQQLKIDKQFTDWMQKCEKFISNQFFKNIEKRNPEINLEILNSKTIIELKSKYCQNLKNERLFQFVFETIKQLGVNAYDDDDDLTIDSSEDRKSIYEILIKSTKVIPKLLFPLEDEDLTIDSPQSLFENGLLDRFYNNPNLMTNQCQLIAQIIKESLKPLLNKKMVFRILEMGGGTCSLSVVVLNLINQLLLENPSFEIDIEYTWSDISPSFISAAKEKLSHIDKRINILYRSIDIEQPFIEKQDLSPSYYDFVIMSNVLHVVKKLSPSLDEIHKILTPNGHLLFVEIPYKELISDSIFGAFNQWWAFEDTDIRKDRCSIPPNQWIQVLSNHNYKDTIVSDNKECTWCCFVIHSQKPSLLELSKKIECNQYDNIIVFGNENSQDNFTKSIKLSYNNNIIKWVSNIVEIKKFIKLNIITNNSIIYFTKGIEELTIDNFKLINFQYIQINQLLLKYESKCKNVLVTRDCDGSNYLASSLIGAARYFDEYRQLELFTLDFDNDTIQSCDECSSSSCSNLIKLIEPLIDPKINIQREFLIRNNRVYFERAKLETNLKKSFKSESFENSNKLISTLNFNLDYQLQSKPFKQLLQNEIEVEIKATGINYRDYLVFTGSLPIEKTNHNGISNQPEFGVDFSGIVTKVGGGGGNGEFKVGDRVYGIGHNTTSSHITIDSRYASLIPNSLDYIEASSITSSYILSLYGIFDIGNLDIQDNESILIHSGTGGIGLSALNSLRWKGHKSHLFVTVSSKEKEQYLRDNYGSFITGIYSNKDKNYPKLIKEKLNQLGSNKQGVDLILSSLPNGDDNLNFKCLAKNGRIIDLSNNIDLFNISKSKIKKLLNTINDGFESGELQVIPIIEFSNSNIRDAIEFINERQHIGKIVISHDDSNLLIDLINKHSNQPNYSILKSDYQISQSNLGKNILITGQSGIVLEILKWIIKFSNSIENVIILSKSLMKWELELLIGKTMKKANNKIKFHFKSVDVSDSIQVENSINQILNDNPNIVNIDSIFHFAFTQITKKVEEIDMESLNVSHNAKTIGAINLHNQSINRNWRLNNFVMASSATSIIGSTDQCSYVCANTVLDSLSKYRKSIGLPSICTNYGAIESAGFVSKNESVAAMFNGIGIISISTDLILGTLDLQIQNQQSSTNLMLSDFNFLNFVNNNLQLSLISKFDFQTNLAKNQVNEKLQNQTQNQNLQIQSPSSTTDCQTIIKDSFLHKISEVLSIDISKLNLDLKLLDYGADSLAIVQIKNWIDMEVSPNLIVIQQLQTFTITSSIQYTINSFLKKKVQSQE.

The Ketosynthase family 3 (KS3) domain occupies 10 to 434; sequence ENDVAIIGIG…GSNCCLILSQ (425 aa). Active-site for beta-ketoacyl synthase activity residues include cysteine 176, histidine 317, and histidine 358. The tract at residues 621-654 is acyl/malonyl transferase; sequence GIEVSFIIGHSLGEIPAAYCSGMINIDTLCYLIY. Serine 631 serves as the catalytic For acyl/malonyl transferase activity. Residues 928 to 1057 are N-terminal hotdog fold; sequence TDNLGYLNEN…GDFQLSNHSS (130 aa). A PKS/mFAS DH domain is found at 928–1226; it reads TDNLGYLNEN…CTSLTPIKES (299 aa). Histidine 961 (proton acceptor; for dehydratase activity) is an active-site residue. Residues 1076–1226 form a C-terminal hotdog fold region; that stretch reads NLTKLSRDEL…CTSLTPIKES (151 aa). Residue aspartate 1136 is the Proton donor; for dehydratase activity of the active site. Residues 2465 to 2542 form the Carrier domain; that stretch reads DCQTIIKDSF…SSIQYTINSF (78 aa). Serine 2502 bears the O-(pantetheine 4'-phosphoryl)serine mark.

Pantetheine 4'-phosphate is required as a cofactor.

Probable polyketide synthase. This chain is Probable polyketide synthase 13 (pks13), found in Dictyostelium discoideum (Social amoeba).